We begin with the raw amino-acid sequence, 110 residues long: uncharacterized protein (110 aa).

The protein to M.jannaschii MJ0123 and MJ1213.

This is an uncharacterized protein from Aquifex aeolicus (strain VF5).